Consider the following 1034-residue polypeptide: Probable isoleucine--tRNA ligase, mitochondrial (1034 aa).

The transit peptide at 1-32 (MISLNNSFFNKRVIVNSFNNYKRSFGTKSQNE) directs the protein to the mitochondrion. Residues 94–104 (PYANGDLHMGH) carry the 'HIGH' region motif. The short motif at 655–659 (KMSKS) is the 'KMSKS' region element. Lysine 658 lines the ATP pocket.

The protein belongs to the class-I aminoacyl-tRNA synthetase family.

The protein resides in the mitochondrion matrix. The enzyme catalyses tRNA(Ile) + L-isoleucine + ATP = L-isoleucyl-tRNA(Ile) + AMP + diphosphate. This Dictyostelium discoideum (Social amoeba) protein is Probable isoleucine--tRNA ligase, mitochondrial (mileS).